A 540-amino-acid polypeptide reads, in one-letter code: Phosphoenolpyruvate carboxykinase (ATP) (540 aa).

Position 65 (Arg-65) interacts with substrate. Residue Lys-87 is modified to N6-acetyllysine. Substrate contacts are provided by Tyr-207 and Lys-213. ATP contacts are provided by residues Lys-213, His-232, and 248–256 (GLSGTGKTT). Lys-213 and His-232 together coordinate Mn(2+). Asp-269 is a Mn(2+) binding site. ATP contacts are provided by residues Glu-297, Arg-333, 449-450 (RI), and Thr-455. Arg-333 is a substrate binding site. Lys-523 carries the N6-acetyllysine modification.

This sequence belongs to the phosphoenolpyruvate carboxykinase (ATP) family. In terms of assembly, monomer. Mn(2+) serves as cofactor.

It localises to the cytoplasm. The catalysed reaction is oxaloacetate + ATP = phosphoenolpyruvate + ADP + CO2. It participates in carbohydrate biosynthesis; gluconeogenesis. Functionally, involved in the gluconeogenesis. Catalyzes the conversion of oxaloacetate (OAA) to phosphoenolpyruvate (PEP) through direct phosphoryl transfer between the nucleoside triphosphate and OAA. In Escherichia coli O45:K1 (strain S88 / ExPEC), this protein is Phosphoenolpyruvate carboxykinase (ATP).